Consider the following 334-residue polypeptide: Phosphate acyltransferase (334 aa).

Belongs to the PlsX family. As to quaternary structure, homodimer. Probably interacts with PlsY.

Its subcellular location is the cytoplasm. The enzyme catalyses a fatty acyl-[ACP] + phosphate = an acyl phosphate + holo-[ACP]. The protein operates within lipid metabolism; phospholipid metabolism. Functionally, catalyzes the reversible formation of acyl-phosphate (acyl-PO(4)) from acyl-[acyl-carrier-protein] (acyl-ACP). This enzyme utilizes acyl-ACP as fatty acyl donor, but not acyl-CoA. The polypeptide is Phosphate acyltransferase (Halothermothrix orenii (strain H 168 / OCM 544 / DSM 9562)).